Consider the following 254-residue polypeptide: 3-oxo-5-alpha-steroid 4-dehydrogenase 2 (254 aa).

4 consecutive transmembrane segments (helical) span residues 8-28 (SPVL…LYVA), 72-92 (PLSL…VHYF), 146-166 (FCLG…SDYI), and 206-226 (LATW…FLGL).

Belongs to the steroid 5-alpha reductase family.

The protein resides in the microsome membrane. The protein localises to the endoplasmic reticulum membrane. It catalyses the reaction a 3-oxo-5alpha-steroid + NADP(+) = a 3-oxo-Delta(4)-steroid + NADPH + H(+). The catalysed reaction is 17beta-hydroxy-5alpha-androstan-3-one + NADP(+) = testosterone + NADPH + H(+). The enzyme catalyses 5alpha-pregnane-3,20-dione + NADP(+) = progesterone + NADPH + H(+). Converts testosterone (T) into 5-alpha-dihydrotestosterone (DHT) and progesterone or corticosterone into their corresponding 5-alpha-3-oxosteroids. It plays a central role in sexual differentiation and androgen physiology. The polypeptide is 3-oxo-5-alpha-steroid 4-dehydrogenase 2 (SRD5A2) (Macaca fascicularis (Crab-eating macaque)).